We begin with the raw amino-acid sequence, 117 residues long: Bomanin Bicipital 1 (117 aa).

Positions 1–20 are cleaved as a signal peptide; that stretch reads MKCLILSFAIFVVLASQATA. Intrachain disulfides connect Cys29–Cys32 and Cys107–Cys110.

It belongs to the bomanin family. As to expression, hemolymph (at protein level).

The protein resides in the secreted. Its function is as follows. Secreted immune-induced peptide induced by Toll signaling. Has a role in resistance to bacterial and fungal infections. The chain is Bomanin Bicipital 1 from Drosophila melanogaster (Fruit fly).